Consider the following 478-residue polypeptide: Quinoprotein glucose dehydrogenase B (478 aa).

Residues methionine 1–alanine 24 form the signal peptide. Residues glutamine 100 and aspartate 167 each coordinate D-glucose. Histidine 168 serves as the catalytic Proton acceptor. Residues glutamine 192 and arginine 252 each contribute to the D-glucose site. The interval arginine 252 to asparagine 253 is PQQ. The Ca(2+) site is built by glycine 271, proline 272, glutamate 277, tyrosine 287, alanine 293, tyrosine 295, aspartate 297, and glutamate 333. Tyrosine 367, threonine 372, and lysine 401 together coordinate pyrroloquinoline quinone. Residues arginine 430–arginine 432 are PQQ.

Belongs to the PQQ oxidoreductase GdhB family. In terms of assembly, homodimer. Requires pyrroloquinoline quinone as cofactor. The cofactor is Ca(2+).

The catalysed reaction is a ubiquinone + D-glucose = D-glucono-1,5-lactone + a ubiquinol. Oxidizes glucose to gluconolactone. The sequence is that of Quinoprotein glucose dehydrogenase B (gdhB) from Acinetobacter calcoaceticus.